The sequence spans 195 residues: MKYIFNRYNALLLRRPLITNMITTGLLVGGGDALAQFFFPNNDNNNLEQQPFDYLRNLRAIIYGSLIFAPIGDKWYKFLNTKVVWTRNAQKPQYQRSMSTLLRVMVDQLVFAPFIGIPLYYSSMTILENRQPFLDNIIDKFNTSWWITLKSNWLVWPLFQFFNFYLLPVQFRLLAVNIISIGWNTYLSYVMHSQK.

Helical transmembrane passes span 17–39 (LITN…QFFF), 59–78 (RAII…WYKF), 99–121 (STLL…PLYY), and 168–190 (PVQF…LSYV).

This sequence belongs to the peroxisomal membrane protein PXMP2/4 family.

It is found in the mitochondrion inner membrane. Functionally, may be involved in cellular response to stress. Required to maintain mitochondrial DNA (mtDNA) integrity and stability. The polypeptide is Protein SYM1 (SYM1) (Candida albicans (strain SC5314 / ATCC MYA-2876) (Yeast)).